The following is a 421-amino-acid chain: Histidine--tRNA ligase (421 aa).

This sequence belongs to the class-II aminoacyl-tRNA synthetase family. Homodimer.

It localises to the cytoplasm. The enzyme catalyses tRNA(His) + L-histidine + ATP = L-histidyl-tRNA(His) + AMP + diphosphate + H(+). The sequence is that of Histidine--tRNA ligase from Francisella tularensis subsp. mediasiatica (strain FSC147).